We begin with the raw amino-acid sequence, 308 residues long: B3 domain-containing protein REM23 (308 aa).

The TF-B3 1 DNA-binding region spans 19 to 114 (FFKVLKRSDM…SFTVKIFNKD (96 aa)). Residues 117 to 198 (EMMQPPQSRA…TERTQNSKRT (82 aa)) form a disordered region. Residues 121-133 (PPQSRASFASSSR) show a composition bias toward polar residues. Positions 134 to 145 (VKTEQDVKREEE) are enriched in basic and acidic residues. Positions 149-166 (SSDSRSRGPTTAAETNRG) are enriched in polar residues. The span at 168–177 (SYKRKLNFGK) shows a compositional bias: basic residues. A compositionally biased stretch (basic and acidic residues) spans 178-198 (KKAEETQTYKRTERTQNSKRT). The segment at residues 216–308 (VAGFKIFISK…LELLLVVSKP (93 aa)) is a DNA-binding region (TF-B3 2).

It localises to the nucleus. In Arabidopsis thaliana (Mouse-ear cress), this protein is B3 domain-containing protein REM23 (REM23).